The primary structure comprises 10746 residues: Extracellular matrix-binding protein ebh (10746 aa).

A signal peptide spans 1–39; it reads MNYRDKIQKFSIRKYTVGTFSTVIATLVFLGLNTSQAQA. Composition is skewed to polar residues over residues 41–59 and 67–113; these read ETNQ…GDTQ and VQNS…SQNE. Disordered stretches follow at residues 41 to 174, 246 to 274, and 1340 to 1372; these read ETNQ…GNVQ, MPQR…PRSV, and IAGN…DGQR. Residues 120 to 130 show a composition bias toward low complexity; the sequence is AAATPTQSAKA. Residues 132–158 show a composition bias toward basic and acidic residues; it reads SKHEQSESRAANKKENDNKATHVESHE. A compositionally biased stretch (polar residues) spans 162-173; the sequence is VTASDSSDSGNV. Low complexity predominate over residues 248-263; the sequence is QRQQTSRRSSRIQTRS. The segment covering 1356-1372 has biased composition (polar residues); sequence YKTTGYSQSNPTSDGQR. FIVAR domains follow at residues 2520-2576, 2606-2662, 2683-2746, 2776-2832, 2860-2915, 2943-2998, 3026-3081, 3150-3208, 3276-3335, 3403-3461, 3529-3587, 3655-3713, 3781-3839, 3907-3965, 4033-4091, 4159-4217, 4285-4343, 4411-4469, 4537-4595, 4663-4721, 4789-4847, 4915-4973, 5041-5099, 5167-5225, 5293-5351, 5419-5477, 5545-5603, 5671-5729, 5797-5855, 5923-5981, 6049-6107, 6175-6232, 6300-6358, 6426-6484, 6552-6610, 6678-6736, 6804-6862, 6930-6988, 7056-7114, 7182-7240, 7308-7366, 7434-7492, 7560-7618, 7686-7744, 7812-7870, 7938-7996, 8064-8125, 8190-8251, 8316-8374, 8442-8500, 8568-8625, 8693-8751, 8819-8877, 8945-9003, 9071-9129, 9197-9255, 9323-9377, 9445-9504, and 9699-9755; these read AKNH…VNAA, SKNN…ISDE, DTHE…VQTA, AKTK…IAAK, AKTQ…IRQN, AKNQ…INTN, AKTQ…INDK, AMTK…VNQK, AMTG…VNNA, AMGN…VNSA, AMGN…VTEA, AMNT…ITQK, AMAS…VEAA, AMGN…VEQA, AMGQ…VTAA, AMKG…ITQA, QMGN…VEAA, AMAN…VENA, AMGT…INQI, AMGQ…VDRA, AMNS…VDNA, AMGA…INGM, AMTV…VNSA, AMHS…VEQA, AMGQ…VERA, AMTA…VTNA, AMKG…INQA, AMTN…VESA, AMSN…VEQA, AMNQ…INQK, AMGN…VQAA, AMGQ…VEAA, AMQR…VEQA, AMDQ…VTAA, AMNQ…VTQA, AMER…VEAA, AMGN…VEAA, AMDK…INQA, AMTQ…ITAA, AMTQ…IQQA, AMTN…VEQA, AMTQ…VAQA, AMGT…VTQA, AMSN…ITRA, AMDQ…ITNE, AMEL…VNRA, AMHG…INQA, LMDA…VTSA, AMKA…IDQA, AMEA…VEQL, AMQA…VEQL, AMET…VDQA, SMDQ…VDQA, VMDQ…VIKL, and AMET…INGA. Residues 7066 to 7080 are compositionally biased toward polar residues; it reads DNATTKQNQNYTDSS. Residues 7066–7085 form a disordered region; sequence DNATTKQNQNYTDSSPNKKD. The span at 10492–10507 shows a compositional bias: polar residues; that stretch reads DHSKPSSNSDGQSNSH. The tract at residues 10492–10530 is disordered; that stretch reads DHSKPSSNSDGQSNSHLHVGYGTVNHPFNSSPIGHKKKL. The chain crosses the membrane as a helical span at residues 10552-10572; that stretch reads IKNALGVVGISGLLASFWFFI. The interval 10649–10746 is disordered; sequence RRKEDEEDVE…KKKKSKKNKK (98 aa). Basic and acidic residues predominate over residues 10664 to 10674; that stretch reads TDEKVLQDNEH. Basic residues predominate over residues 10719–10746; it reads KGKKSASKKPSKKVAAKKKKKKSKKNKK.

The protein localises to the cell membrane. The chain is Extracellular matrix-binding protein ebh (ebh) from Staphylococcus aureus (strain MRSA252).